A 441-amino-acid chain; its full sequence is Coiled-coil domain-containing protein 91 (441 aa).

Residues 1–16 (MDDDDFGGFEAAETFD) form a GGA1-binding motif region. Residues 1–26 (MDDDDFGGFEAAETFDGGSGETQTTS) are disordered. A phosphoserine mark is found at Ser-43 and Ser-46. Coiled coils occupy residues 130–209 (SNIQ…GHEA) and 249–407 (ELLN…KRLD). The tract at residues 210–413 (LSIIVDEYKA…KRLDQVIRQR (204 aa)) is homodimerization.

Homodimer. Interacts with GGA1, GGA2 and AP1G1. In terms of tissue distribution, widely expressed.

It localises to the membrane. The protein localises to the golgi apparatus. Its subcellular location is the trans-Golgi network membrane. The protein resides in the trans-Golgi network. Involved in the regulation of membrane traffic through the trans-Golgi network (TGN). Functions in close cooperation with the GGAs in the sorting of hydrolases to lysosomes. The polypeptide is Coiled-coil domain-containing protein 91 (CCDC91) (Homo sapiens (Human)).